The chain runs to 525 residues: Cytochrome P450 CYP72A613 (525 aa).

The helical transmembrane segment at valine 2–isoleucine 22 threads the bilayer. A heme-binding site is contributed by cysteine 473.

This sequence belongs to the cytochrome P450 family. In terms of tissue distribution, mainly expressed in leaves and seed pods and, to a lower extent, in flowers and stems.

It localises to the membrane. The protein operates within steroid metabolism; cholesterol metabolism. Functionally, involved in the biosynthesis of spiroketal steroid and saponin natural products from cholesterol such as diosgenin and analogs (e.g. furostanol and spirostanol), plant defense compounds used as main precursors for the industrial production of steroid hormones. During the 5,6-spiroketalization of cholesterol, may catalyze the 27-monohydroxylation of furostanol-type steroid to an intermediate product that undergoes a stereospecific formation of the terminal heterocycle to yield diosgenin. This chain is Cytochrome P450 CYP72A613, found in Trigonella foenum-graecum (Fenugreek).